A 312-amino-acid polypeptide reads, in one-letter code: Glyoxylate/hydroxypyruvate reductase A (312 aa).

R227 is an active-site residue. The Proton donor role is filled by H275.

It belongs to the D-isomer specific 2-hydroxyacid dehydrogenase family. GhrA subfamily.

Its subcellular location is the cytoplasm. The catalysed reaction is glycolate + NADP(+) = glyoxylate + NADPH + H(+). It catalyses the reaction (R)-glycerate + NAD(+) = 3-hydroxypyruvate + NADH + H(+). The enzyme catalyses (R)-glycerate + NADP(+) = 3-hydroxypyruvate + NADPH + H(+). Functionally, catalyzes the NADPH-dependent reduction of glyoxylate and hydroxypyruvate into glycolate and glycerate, respectively. The sequence is that of Glyoxylate/hydroxypyruvate reductase A from Salmonella enteritidis PT4 (strain P125109).